The sequence spans 389 residues: MKVHEYQAKEILRRHNANVPFGKVIDAVGDFEKAYNEVVQKSPVVVVKAQIHAGGRGKGGGVKVAKTKDDAKAAAEKILGMQLITPQTGPEGKKVLKVYLEQGLEIAKEYYLSILLDRAIRKTIIMASTEGGMEIEEVAETHPEKIIKIQIDPGIGIQGSQVRELAFALGIPTEAQKSFTALVNSVYNAYIKEDAALLEINPLILTKQNEIIAGDCKMDLDENALYRHPDNEALRDITEEDPYEVKAKEYNLNYVKLDGNIGCMVNGAGLAMATMDIVKLAGAEPANFLDVGGGANPTTVENGFRLILSDPNVKGIFVNVFGGIVRCDRVAVGIIEATKKVNVSVPVVVRLKGTNAEEGKKILNESGMNIVGVEGLRDAADKIVSLIKK.

Residues 9 to 246 (KEILRRHNAN…ITEEDPYEVK (238 aa)) enclose the ATP-grasp domain. ATP contacts are provided by residues Lys-48, 55–57 (GRG), Glu-101, Leu-104, and Glu-109. Asn-201 and Asp-215 together coordinate Mg(2+). Residues Asn-266 and 323 to 325 (GIV) contribute to the substrate site.

It belongs to the succinate/malate CoA ligase beta subunit family. Heterotetramer of two alpha and two beta subunits. Mg(2+) is required as a cofactor.

It catalyses the reaction succinate + ATP + CoA = succinyl-CoA + ADP + phosphate. The catalysed reaction is GTP + succinate + CoA = succinyl-CoA + GDP + phosphate. The protein operates within carbohydrate metabolism; tricarboxylic acid cycle; succinate from succinyl-CoA (ligase route): step 1/1. In terms of biological role, succinyl-CoA synthetase functions in the citric acid cycle (TCA), coupling the hydrolysis of succinyl-CoA to the synthesis of either ATP or GTP and thus represents the only step of substrate-level phosphorylation in the TCA. The beta subunit provides nucleotide specificity of the enzyme and binds the substrate succinate, while the binding sites for coenzyme A and phosphate are found in the alpha subunit. The polypeptide is Succinate--CoA ligase [ADP-forming] subunit beta (Leptospira biflexa serovar Patoc (strain Patoc 1 / Ames)).